The following is a 476-amino-acid chain: Calcitonin gene-related peptide type 1 receptor (476 aa).

The signal sequence occupies residues Met-1–Ala-33. Residues Ser-34–Leu-154 are Extracellular-facing. Cystine bridges form between Cys-63–Cys-89, Cys-80–Cys-120, and Cys-103–Cys-142. N-linked (GlcNAc...) asparagine glycans are attached at residues Asn-81, Asn-133, and Asn-138. A helical membrane pass occupies residues Asn-155–Phe-179. At Tyr-180–Thr-190 the chain is on the cytoplasmic side. A helical membrane pass occupies residues Leu-191–Val-213. Over Ala-214–Pro-224 the chain is Extracellular. Residues Val-225 to His-253 form a helical membrane-spanning segment. The Cytoplasmic segment spans residues Thr-254–Leu-267. A helical transmembrane segment spans residues Met-268–Ala-288. Topologically, residues Arg-289–His-304 are extracellular. The chain crosses the membrane as a helical span at residues Leu-305–Arg-329. The Cytoplasmic portion of the chain corresponds to Val-330 to Asn-344. Residues Leu-345–Leu-366 form a helical membrane-spanning segment. The Extracellular portion of the chain corresponds to Phe-367–Asp-381. The chain crosses the membrane as a helical span at residues Tyr-382–Phe-402. Topologically, residues Asn-403–Met-476 are cytoplasmic.

This sequence belongs to the G-protein coupled receptor 2 family.

It localises to the cell membrane. Its function is as follows. May function as G protein-coupled receptor for calcitonin-gene-related peptides and adrenomedullin. Specificity may be modulated by accessory proteins. May activate cAMP-dependent pathway. The polypeptide is Calcitonin gene-related peptide type 1 receptor (calcrl) (Xenopus laevis (African clawed frog)).